Consider the following 369-residue polypeptide: mRNA cap guanine-N(7) methyltransferase 1 (369 aa).

A disordered region spans residues 1–55 (MNKRPRDEPSSSFASAPKRQYGAGGGGYGGHGYSEERSSARRVADHYSARSNQTL). Over residues 22–32 (GAGGGGYGGHG) the composition is skewed to gly residues. Over residues 33–48 (YSEERSSARRVADHYS) the composition is skewed to basic and acidic residues. The mRNA cap 0 methyltransferase domain occupies 61 to 340 (SPIIHLKKLN…LYLAFVLRKR (280 aa)). Position 70-71 (70-71 (NN)) interacts with mRNA. Residues K74, A92, D114, 149–150 (DC), and 171–173 (QFA) contribute to the S-adenosyl-L-methionine site.

It belongs to the class I-like SAM-binding methyltransferase superfamily. mRNA cap 0 methyltransferase family.

It is found in the nucleus. It catalyses the reaction a 5'-end (5'-triphosphoguanosine)-ribonucleoside in mRNA + S-adenosyl-L-methionine = a 5'-end (N(7)-methyl 5'-triphosphoguanosine)-ribonucleoside in mRNA + S-adenosyl-L-homocysteine. MRNA-capping methyltransferase that methylates the N7 position of the added guanosine to the 5'-cap structure of mRNAs. Binds RNA containing 5'-terminal GpppC. The polypeptide is mRNA cap guanine-N(7) methyltransferase 1 (Oryza sativa subsp. japonica (Rice)).